Reading from the N-terminus, the 858-residue chain is Bifunctional uridylyltransferase/uridylyl-removing enzyme (858 aa).

Residues 1-324 (MSASVAEPPP…PATSGVTRVL (324 aa)) form a uridylyltransferase region. The tract at residues 325 to 681 (SPGRFVEKQG…ARPSPVGDAL (357 aa)) is uridylyl-removing. An HD domain is found at 443–565 (VDQHILMVLR…VGSERRLTAL (123 aa)). ACT domains follow at residues 682–761 (QVLV…PEPS) and 790–858 (ILSV…AIAV).

This sequence belongs to the GlnD family. Mg(2+) is required as a cofactor.

It catalyses the reaction [protein-PII]-L-tyrosine + UTP = [protein-PII]-uridylyl-L-tyrosine + diphosphate. The enzyme catalyses [protein-PII]-uridylyl-L-tyrosine + H2O = [protein-PII]-L-tyrosine + UMP + H(+). With respect to regulation, uridylyltransferase (UTase) activity is inhibited by glutamine, while glutamine activates uridylyl-removing (UR) activity. Its function is as follows. Modifies, by uridylylation and deuridylylation, the PII regulatory proteins (GlnB and homologs), in response to the nitrogen status of the cell that GlnD senses through the glutamine level. Under low glutamine levels, catalyzes the conversion of the PII proteins and UTP to PII-UMP and PPi, while under higher glutamine levels, GlnD hydrolyzes PII-UMP to PII and UMP (deuridylylation). Thus, controls uridylylation state and activity of the PII proteins, and plays an important role in the regulation of nitrogen assimilation and metabolism. This is Bifunctional uridylyltransferase/uridylyl-removing enzyme from Burkholderia pseudomallei (strain K96243).